A 377-amino-acid polypeptide reads, in one-letter code: MSNGIVIIGSGFAARQLVKNIRKQDATIPLTLIAADSMDEYNKPDLSHVISQGQRADDLTRQTAGEFAEQFNLHLFPHTWVTDIDAEARVVKSQNNQWQYDKLVLATGASAFVPSVPGRELMLTLNSQQEYRACETQLRDARRVLIVGGGLIGSELAMDFCRAGKMVTLIDNAASILASLMPPEVSSRLQHRLTEMGVHLLLKSQLQGLEKTDSGILATLDRQRSIEVDAVIAATGLRPETALARRAGLTINRGVCVDSYLQTSNADIYALGDCAEINGQVLPFLQPIQLSAMVLAKNLLGNNTPLKLPAMLVKIKTPELPLHLAGETQRQDLRWQINTESQGMVARGVDDADQLRAFVVSEDRMKEAFGLLKTLPV.

It belongs to the FAD-dependent oxidoreductase family. Requires FAD as cofactor.

It localises to the cytoplasm. The enzyme catalyses 2 reduced [nitric oxide reductase rubredoxin domain] + NAD(+) + H(+) = 2 oxidized [nitric oxide reductase rubredoxin domain] + NADH. It participates in nitrogen metabolism; nitric oxide reduction. In terms of biological role, one of at least two accessory proteins for anaerobic nitric oxide (NO) reductase. Reduces the rubredoxin moiety of NO reductase. The chain is Nitric oxide reductase FlRd-NAD(+) reductase from Shigella dysenteriae serotype 1 (strain Sd197).